We begin with the raw amino-acid sequence, 1252 residues long: Protein ITPRID2 (1252 aa).

Residues 28–70 are disordered; that stretch reads CRSSWQASETEDLSTETTTQDEDEDDEEDLPGTKLPAPAGRGN. Residues 36–57 show a composition bias toward acidic residues; the sequence is ETEDLSTETTTQDEDEDDEEDL. Phosphothreonine is present on Thr85. Phosphoserine occurs at positions 90, 109, 207, 268, and 328. Disordered regions lie at residues 306-483, 552-575, and 595-636; these read DKTE…HVPA, HVTP…APLQ, and FPQC…GELP. Low complexity predominate over residues 357–372; it reads TVTEEVSGSSSTVTDS. Composition is skewed to basic and acidic residues over residues 395–407 and 415–428; these read SREA…DPLR and DLGH…HCEL. The segment covering 429–441 has biased composition (low complexity); it reads ESSSELKSAQASS. Position 465 is a phosphoserine (Ser465). Phosphoserine is present on residues Ser643, Ser667, Ser736, Ser738, Ser745, Ser758, and Ser766. Residue Lys807 forms a Glycyl lysine isopeptide (Lys-Gly) (interchain with G-Cter in SUMO2) linkage. A phosphoserine mark is found at Ser866 and Ser898. A coiled-coil region spans residues 955–1031; the sequence is QELQVVRRSL…LLGLDEQLRA (77 aa). Ser1036, Ser1051, Ser1056, Ser1059, and Ser1114 each carry phosphoserine. Disordered regions lie at residues 1095–1131 and 1147–1180; these read GESS…GSKP and ALTP…ASPV. Positions 1103–1117 are enriched in low complexity; it reads SQATSESSSVCSSPS. Thr1149 is modified (phosphothreonine). The span at 1151–1161 shows a compositional bias: polar residues; the sequence is TAPSRTGSVQT. Ser1154 is modified (phosphoserine). Thr1161 bears the Phosphothreonine mark.

Its subcellular location is the cytoplasm. The sequence is that of Protein ITPRID2 (Itprid2) from Mus musculus (Mouse).